Reading from the N-terminus, the 256-residue chain is uncharacterized protein (256 aa).

Positions 1 to 24 are cleaved as a signal peptide; it reads MIKRVNKLVLGISLLFLVISITAG. Cys-25 carries the N-palmitoyl cysteine lipid modification. The S-diacylglycerol cysteine moiety is linked to residue Cys-25.

The protein belongs to the staphylococcal tandem lipoprotein family.

It localises to the cell membrane. This is an uncharacterized protein from Staphylococcus aureus.